Here is an 888-residue protein sequence, read N- to C-terminus: DNA mismatch repair protein MutS (888 aa).

641–648 (GPNMAGKS) provides a ligand contact to ATP.

This sequence belongs to the DNA mismatch repair MutS family.

This protein is involved in the repair of mismatches in DNA. It is possible that it carries out the mismatch recognition step. This protein has a weak ATPase activity. The polypeptide is DNA mismatch repair protein MutS (Rickettsia bellii (strain OSU 85-389)).